Consider the following 481-residue polypeptide: Cardiolipin synthase A (481 aa).

The next 2 helical transmembrane spans lie at F10 to L30 and I40 to F60. PLD phosphodiesterase domains lie at V220 to Y247 and Q394 to S421. Catalysis depends on residues H225, K227, D232, H399, K401, and D406.

The protein belongs to the phospholipase D family. Cardiolipin synthase subfamily. ClsA sub-subfamily.

The protein localises to the cell inner membrane. It catalyses the reaction 2 a 1,2-diacyl-sn-glycero-3-phospho-(1'-sn-glycerol) = a cardiolipin + glycerol. In terms of biological role, catalyzes the reversible phosphatidyl group transfer from one phosphatidylglycerol molecule to another to form cardiolipin (CL) (diphosphatidylglycerol) and glycerol. The sequence is that of Cardiolipin synthase A from Pseudomonas putida (strain ATCC 47054 / DSM 6125 / CFBP 8728 / NCIMB 11950 / KT2440).